The sequence spans 401 residues: Methionyl-tRNA formyltransferase, mitochondrial (401 aa).

The N-terminal 26 residues, 1-26 (MVKMRRITPTRLLFTCRYISNNASPP), are a transit peptide targeting the mitochondrion. (6R)-10-formyltetrahydrofolate is bound by residues 18-20 (YIS) and 66-70 (VVTRS).

This sequence belongs to the Fmt family. In terms of processing, phosphorylated by GCN2 in response to nutrient deprivation. Phosphorylation mediates retention of FMT1 in the cytoplasm.

The protein resides in the mitochondrion. Its subcellular location is the mitochondrion matrix. It localises to the cytoplasm. It carries out the reaction L-methionyl-tRNA(fMet) + (6R)-10-formyltetrahydrofolate = N-formyl-L-methionyl-tRNA(fMet) + (6S)-5,6,7,8-tetrahydrofolate + H(+). Its function is as follows. Formylates methionyl-tRNA in mitochondria and the cytoplasm. Responsible for the formylation of the 8 N-terminally formylated (Nt-formylated) mitochondrial matrix proteins that are encoded by mitochondrial DNA. Nt-formylated proteins in the cytoplasm are strongly up-regulated in stationary phase or upon starvation for specific amino acids (His or Lys) and are targeted for degradation by a PSH1 E3 ubiquitin ligase-mediated fMet/N-end rule pathway. Increased Nt-formylation of cytosolic proteins appears to be important for adaptation to these stresses. Stationary phase-degraded Nt-formylated proteins include histone H3-like centromeric protein CSE4, Mediator complex subunit 3 (PGD1) and small ribosomal subunit protein uS8-A (RPS22A). In Saccharomyces cerevisiae (strain ATCC 204508 / S288c) (Baker's yeast), this protein is Methionyl-tRNA formyltransferase, mitochondrial (FMT1).